Here is a 510-residue protein sequence, read N- to C-terminus: Sucrose transport protein SUC4 (510 aa).

A disordered region spans residues 1-34; that stretch reads MATSDQDRRHRVTRNRPPIARPSTSSSRPVVSPP. Topologically, residues 1–45 are cytoplasmic; that stretch reads MATSDQDRRHRVTRNRPPIARPSTSSSRPVVSPPRSKVSKRVLLR. A compositionally biased stretch (low complexity) spans 21-34; that stretch reads RPSTSSSRPVVSPP. Serine 23 is modified (phosphoserine). Residues 46 to 66 traverse the membrane as a helical segment; it reads VASVACGIQFGWALQLSLLTP. The Extracellular segment spans residues 67–71; it reads YVQEL. A helical membrane pass occupies residues 72–92; the sequence is GIPHAWASVIWLCGPLSGLFV. Over 93-111 the chain is Cytoplasmic; it reads QPLVGHSSDRCTSKYGRRR. A helical transmembrane segment spans residues 112–132; the sequence is PFIVAGAVAISISVMVIGHAA. Topologically, residues 133 to 148 are extracellular; it reads DIGWAFGDREGKIKPR. A helical membrane pass occupies residues 149 to 169; that stretch reads AIVAFVLGFWILDVANNMTQG. Residues 170 to 187 are Cytoplasmic-facing; sequence PCRALLADLTENDNRRTR. Residues 188–208 traverse the membrane as a helical segment; sequence VANGYFSLFMAVGNVLGYATG. Topologically, residues 209–233 are extracellular; that stretch reads SYNGWYKIFTFTKTVACNVECANLK. The helical transmembrane segment at 234-254 threads the bilayer; that stretch reads SAFYIDVVFIAITTILSVSAA. The Cytoplasmic portion of the chain corresponds to 255–291; that stretch reads HEVPLASLASEAHGQTSGTDEAFLSEIFGTFRYFPGN. The chain crosses the membrane as a helical span at residues 292–312; sequence VWIILLVTALTWIGWFPFILF. Topologically, residues 313–335 are extracellular; that stretch reads DTDWMGREIYGGEPNIGTSYSAG. Residues 336 to 356 form a helical membrane-spanning segment; the sequence is VSMGALGLMLNSVFLGITSVL. At 357–365 the chain is on the cytoplasmic side; that stretch reads MEKLCRKWG. A helical transmembrane segment spans residues 366 to 386; it reads AGFVWGISNILMAICFLGMII. The Extracellular portion of the chain corresponds to 387–402; sequence TSFVASHLGYIGHEQP. The chain crosses the membrane as a helical span at residues 403–423; the sequence is PASIVFAAVLIFTILGIPLAI. The Cytoplasmic segment spans residues 424–443; sequence TYSVPYALISIRIESLGLGQ. The helical transmembrane segment at 444–464 threads the bilayer; that stretch reads GLSLGVLNLAIVIPQVIVSVG. Residues 465–477 are Extracellular-facing; sequence SGPWDQLFGGGNS. The chain crosses the membrane as a helical span at residues 478-498; it reads PALAVGAATGFIGGIVAILAL. The Cytoplasmic portion of the chain corresponds to 499–510; it reads PRTRIQKPIPLP.

Belongs to the glycoside-pentoside-hexuronide (GPH) cation symporter transporter (TC 2.A.2.4) family. As to quaternary structure, homodimer. Interacts with SUC2 and SUC3. In terms of tissue distribution, expressed in sink tissues, mostly in minor veins of sink leaves. Localized in companion cells.

It localises to the cell membrane. The catalysed reaction is sucrose(out) + H(+)(out) = sucrose(in) + H(+)(in). It functions in the pathway glycan biosynthesis; sucrose metabolism. Its function is as follows. Responsible for the transport of sucrose into the cell, with the concomitant uptake of protons (symport system). Can also transport maltose at a lesser rate. May also transport biotin. The protein is Sucrose transport protein SUC4 of Arabidopsis thaliana (Mouse-ear cress).